The following is a 382-amino-acid chain: Palmitoyltransferase ZDHHC16B (382 aa).

Topologically, residues Met1–Arg75 are cytoplasmic. Residues Trp76–Val96 traverse the membrane as a helical segment. At Tyr97–Ser107 the chain is on the lumenal side. A helical membrane pass occupies residues Tyr108–His130. Residues Tyr131 to Arg196 are Cytoplasmic-facing. The 51-residue stretch at Thr153–Leu203 folds into the DHHC domain. The S-palmitoyl cysteine intermediate role is filled by Cys183. A helical transmembrane segment spans residues Tyr197–Lys217. Residues Asp218–Ser275 lie on the Lumenal side of the membrane. The chain crosses the membrane as a helical span at residues Leu276 to Trp296. Over His297 to Ile382 the chain is Cytoplasmic.

The protein belongs to the DHHC palmitoyltransferase family.

Its subcellular location is the endoplasmic reticulum membrane. The enzyme catalyses L-cysteinyl-[protein] + hexadecanoyl-CoA = S-hexadecanoyl-L-cysteinyl-[protein] + CoA. Its function is as follows. Palmitoyl acyltransferase that mediates palmitoylation of proteins and is required during embryonic heart development. Involved in the proliferation of neural stem cells by regulating the FGF/ERK pathway. This is Palmitoyltransferase ZDHHC16B from Danio rerio (Zebrafish).